We begin with the raw amino-acid sequence, 426 residues long: Enolase (426 aa).

Gln-162 contributes to the (2R)-2-phosphoglycerate binding site. The Proton donor role is filled by Glu-204. Residues Asp-241, Glu-284, and Asp-311 each coordinate Mg(2+). Positions 336, 365, 366, and 387 each coordinate (2R)-2-phosphoglycerate. Lys-336 acts as the Proton acceptor in catalysis.

It belongs to the enolase family. As to quaternary structure, component of the RNA degradosome, a multiprotein complex involved in RNA processing and mRNA degradation. It depends on Mg(2+) as a cofactor.

The protein localises to the cytoplasm. It is found in the secreted. Its subcellular location is the cell surface. It catalyses the reaction (2R)-2-phosphoglycerate = phosphoenolpyruvate + H2O. It participates in carbohydrate degradation; glycolysis; pyruvate from D-glyceraldehyde 3-phosphate: step 4/5. Catalyzes the reversible conversion of 2-phosphoglycerate (2-PG) into phosphoenolpyruvate (PEP). It is essential for the degradation of carbohydrates via glycolysis. This is Enolase from Hydrogenovibrio crunogenus (strain DSM 25203 / XCL-2) (Thiomicrospira crunogena).